Reading from the N-terminus, the 843-residue chain is Protein piwi (843 aa).

The short motif at 1–12 is the Nuclear localization signal element; sequence MADDQGRGRRRP. The disordered stretch occupies residues 1 to 76; that stretch reads MADDQGRGRR…TERKPWGDQY (76 aa). The interval 1 to 257 is interaction with CBX5 and papi; that stretch reads MADDQGRGRR…ILLGTEITHK (257 aa). Symmetric dimethylarginine occurs at positions 7, 9, 10, and 11. The span at 41–72 shows a compositional bias: basic and acidic residues; it reads PRADPRIEASRERRALEEAPRREGGPTERKPW. The PAZ domain occupies 263 to 372; it reads TIYDIMRRCS…LIPELCRVTG (110 aa). The 292-residue stretch at 538–829 folds into the Piwi domain; sequence LILCLVPNDN…LATLVGTNLH (292 aa). Gln589 lines the Mg(2+) pocket. Catalysis depends on residues Asp614 and Asp685. Leu843 is a binding site for Mg(2+).

It belongs to the argonaute family. Piwi subfamily. In terms of assembly, in the ovaries, part of a complex composed of at least Panx, nxf2, piwi and Nxt1. The complex is knowns as Panx-induced co-transcriptional silencing (PICTS) complex, Panx-nxf2-dependent TAP/p15 silencing (Pandas complex), SFiNX (silencing factor interacting nuclear export variant) or piwi-Panx-nxf2-p15 (PPNP) complex. Interacts with vas; this interaction is RNA-independent. Interacts with Dcr-1 and Fmr1; these interactions occur in polar granules. Interacts (via N-terminal region) with CBX5 (via chromoshadow domain). Forms a complex with Hsp83 and Hop; probably Hop mediates the interaction between piwi and Hsp83. Forms a complex with Yb body components armi and fs(1)Yb; this interaction is required for proper piRNA loading and nuclear localization of piwi. Interaction of Piwi and fs(1)Yb is likely to occur via armi. Interacts (via the N-terminal region when unmethylated or symmetrically methylated at Arg-10) with papi (via Tudor domain). Interacts with vret. Interacts with Panx. Interacts with arx. Interacts with Tudor-SN. Interacts with Nup358 (via N-terminus). Associates with the nuclear pore complex via interaction with Elys. Interacts with thoc5; the interaction might be partly RNA-mediated. Interacts with xmas-2. Post-translationally, symmetrically dimethylated, most likely by csul. Methylation at Arg-10 enhances binding to papi whereas methylation at Arg-7, Arg-9 or Arg-11 reduces binding affinity to papi. In terms of processing, phosphorylated on serine and tyrosine residues in an Hsp83-dependent manner. In terms of tissue distribution, expressed in ovaries (at protein level). Expressed somatically in ovariole terminal filament cells, epithelial sheath cells, cap cells and follicle cells (at protein level). Expressed in nurse cells and oocytes in developing egg chambers (at protein level). In embryos, accumulates in pole cells (at protein level). In larval and adult testis, expressed in a germinal proliferative center at the apical tip containing somatic hub cells and mitotically dividing germ stem cells (at protein level).

Its subcellular location is the cytoplasm. It is found in the nucleus. It localises to the nucleoplasm. The protein localises to the chromosome. Functionally, acts via the piwi-interacting RNA (piRNA) metabolic process, which mediates the repression of transposable elements during meiosis by forming complexes composed of piRNAs and Piwi proteins and governs the methylation and subsequent repression of transposons. Directly binds piRNAs, a class of 24 to 30 nucleotide RNAs that are generated by a Dicer-independent mechanism and are primarily derived from transposons and other repeated sequence elements. In ovarian somatic cells, mediates silencing of transposable elements at the transcriptional level in a mael-dependent manner. Involved in silencing of long terminal repeat (LTR) retrotransposons in male germline. In testis, regulates spermatogenesis together with Tudor-SN. In germ cells, mediates silencing at both transcriptional and post-transcriptional levels and is involved in the maintenance of populations of primary and secondary piRNAs. Piwi-mediated transcriptional silencing is accompanied by the formation of His3 trimethylated on 'Lys-10' (H3K9me3) associated euchromatin and heterochromatin. In ovary, associates predominantly with antisense piRNAs that contain uridine at their 5' end. Association with sense piRNAs is also observed but to a lesser extent. Mediates a somatic signaling mechanism required for the maintenance of germline stem cells to produce and maintain a daughter germline stem cell. It is not essential for the further differentiation of the committed daughter cell. Acts cell autonomously to promote germline stem cell division. Its role in stem cell maintenance does not seem to require nuclear localization. Required maternally for the posterior localization of osk and vas and for pole cell formation during oogenesis and early embryogenesis. Together with Hop and Hsp83, mediates canalization, also known as developmental robustness, likely via epigenetic silencing of existing genetic variants and suppression of transposon-induced new genetic variation. Shows RNA cleavage activity, although is not required for any of its known functions. In the ovaries, forms a complex with nxf2, Panx and Nxt1 which acts as effectors of cotranscriptional transposon silencing. The polypeptide is Protein piwi (Drosophila melanogaster (Fruit fly)).